The sequence spans 646 residues: Beta-mannosyltransferase 6 (646 aa).

Topologically, residues 1–25 are cytoplasmic; sequence MGNYKPSIKQYVVTVKAIKSSQFGR. The helical transmembrane segment at 26–46 threads the bilayer; the sequence is LGICAVVLLFVLGYPFYFISN. Residues 47–646 lie on the Extracellular side of the membrane; the sequence is NPFDTSIRYQ…LTGGWLPSHN (600 aa). 9 N-linked (GlcNAc...) asparagine glycosylation sites follow: Asn62, Asn81, Asn103, Asn117, Asn127, Asn132, Asn146, Asn334, and Asn393.

This sequence belongs to the BMT family.

The protein localises to the membrane. Its function is as follows. Beta-mannosyltransferase involved in cell wall biosynthesis. Required for beta-1,2-mannose transfer on phospholipomannan. Required for pro-inflammatory response in macrophages through phospholipomannan-induced TNF-alpha production. The polypeptide is Beta-mannosyltransferase 6 (BMT6) (Candida albicans (strain SC5314 / ATCC MYA-2876) (Yeast)).